Consider the following 160-residue polypeptide: MSRRHAAGKRVILPDMKYNSILLSRFINNLMKEGKKALAEKIVYSAFNKIEKKHRVDPYQIFNNAMHNVKPHLEVTSVRVGGANYQVPTHVDESRGYALASRWIINAALKRSEKMMIDKLAEELFEASNNRGVAIKKKEDTHKMAEANKAFSHFSPKKMK.

This sequence belongs to the universal ribosomal protein uS7 family. As to quaternary structure, part of the 30S ribosomal subunit. Contacts proteins S9 and S11.

Functionally, one of the primary rRNA binding proteins, it binds directly to 16S rRNA where it nucleates assembly of the head domain of the 30S subunit. Is located at the subunit interface close to the decoding center, probably blocks exit of the E-site tRNA. In Rickettsia canadensis (strain McKiel), this protein is Small ribosomal subunit protein uS7.